The sequence spans 220 residues: MKFLILNCLILFSLISSEATNVKLDREDQNHLVLLNEKNFEKLTQASTGATTGTWFVKFYAPWCSHCRKMAPAWESLAKALKGQVNVADVDVTRNLNLGKRFQIRGYPTLLLFHKGKMYQYEGGERTVEKLSEFALGDFKNAVGAPVPQPLSLFALVSDFVVSGVNEALRVYDAALAGFVTISSFSFLFGLLVGLMLSLFLFTRRATRKPKVLTERKKDK.

The signal sequence occupies residues 1–19; sequence MKFLILNCLILFSLISSEA. A Thioredoxin domain is found at 20–141; that stretch reads TNVKLDREDQ…SEFALGDFKN (122 aa). Residues 20–181 lie on the Lumenal side of the membrane; sequence TNVKLDREDQ…YDAALAGFVT (162 aa). A disulfide bridge links cysteine 64 with cysteine 67. The chain crosses the membrane as a helical span at residues 182-202; sequence ISSFSFLFGLLVGLMLSLFLF. At 203–220 the chain is on the cytoplasmic side; sequence TRRATRKPKVLTERKKDK. The Di-lysine motif signature appears at 217–220; sequence KKDK.

The protein belongs to the protein disulfide isomerase family.

The protein localises to the endoplasmic reticulum membrane. This Theileria parva (East coast fever infection agent) protein is Thioredoxin domain-containing protein.